Consider the following 68-residue polypeptide: Large ribosomal subunit protein bL35 (68 aa).

Belongs to the bacterial ribosomal protein bL35 family.

The protein is Large ribosomal subunit protein bL35 of Wolbachia pipientis wMel.